Consider the following 441-residue polypeptide: D-aminoacyl-tRNA deacylase (441 aa).

It belongs to the DtdA deacylase family. Monomer. Requires Zn(2+) as cofactor.

It carries out the reaction a D-aminoacyl-tRNA + H2O = a tRNA + a D-alpha-amino acid + H(+). The catalysed reaction is glycyl-tRNA(Ala) + H2O = tRNA(Ala) + glycine + H(+). Its function is as follows. D-aminoacyl-tRNA deacylase with broad substrate specificity. By recycling D-aminoacyl-tRNA to D-amino acids and free tRNA molecules, this enzyme counteracts the toxicity associated with the formation of D-aminoacyl-tRNA entities in vivo. The chain is D-aminoacyl-tRNA deacylase from Natronomonas pharaonis (strain ATCC 35678 / DSM 2160 / CIP 103997 / JCM 8858 / NBRC 14720 / NCIMB 2260 / Gabara) (Halobacterium pharaonis).